A 949-amino-acid chain; its full sequence is Glycine dehydrogenase (decarboxylating) (949 aa).

Position 697 is an N6-(pyridoxal phosphate)lysine (lysine 697).

It belongs to the GcvP family. The glycine cleavage system is composed of four proteins: P, T, L and H. Pyridoxal 5'-phosphate is required as a cofactor.

The catalysed reaction is N(6)-[(R)-lipoyl]-L-lysyl-[glycine-cleavage complex H protein] + glycine + H(+) = N(6)-[(R)-S(8)-aminomethyldihydrolipoyl]-L-lysyl-[glycine-cleavage complex H protein] + CO2. Its function is as follows. The glycine cleavage system catalyzes the degradation of glycine. The P protein binds the alpha-amino group of glycine through its pyridoxal phosphate cofactor; CO(2) is released and the remaining methylamine moiety is then transferred to the lipoamide cofactor of the H protein. The protein is Glycine dehydrogenase (decarboxylating) of Deinococcus radiodurans (strain ATCC 13939 / DSM 20539 / JCM 16871 / CCUG 27074 / LMG 4051 / NBRC 15346 / NCIMB 9279 / VKM B-1422 / R1).